We begin with the raw amino-acid sequence, 709 residues long: Polyribonucleotide nucleotidyltransferase (709 aa).

Residues Asp486 and Asp492 each contribute to the Mg(2+) site. The KH domain maps to 553–612; it reads PRIHTIKINADKIKDVIGKGGSVIRALTEETGTTIEIEDDGTVKIAATSGEQAKQAIARI. The region spanning 622–690 is the S1 motif domain; that stretch reads GRIYNGKVTR…RQGRIRLSMK (69 aa). A disordered region spans residues 690–709; that stretch reads KEAQATQQEAAETSSEDPAN. A compositionally biased stretch (low complexity) spans 691-702; the sequence is EAQATQQEAAET.

Belongs to the polyribonucleotide nucleotidyltransferase family. As to quaternary structure, component of the RNA degradosome, which is a multiprotein complex involved in RNA processing and mRNA degradation. It depends on Mg(2+) as a cofactor.

The protein resides in the cytoplasm. The catalysed reaction is RNA(n+1) + phosphate = RNA(n) + a ribonucleoside 5'-diphosphate. Involved in mRNA degradation. Catalyzes the phosphorolysis of single-stranded polyribonucleotides processively in the 3'- to 5'-direction. This chain is Polyribonucleotide nucleotidyltransferase, found in Proteus mirabilis (strain HI4320).